The sequence spans 360 residues: Phospho-N-acetylmuramoyl-pentapeptide-transferase (360 aa).

10 helical membrane-spanning segments follow: residues 27–47 (GAIA…IKSL), 72–92 (TPTM…LLWA), 94–114 (LSNH…AIGF), 135–155 (LACE…LGTP), 167–187 (GYVV…IVAS), 199–219 (GLAI…AYLV), 236–256 (AGEL…FLWF), 263–283 (IFMG…IAVA), 289–309 (VLAI…VQVV), and 337–357 (QVVV…LSTL).

This sequence belongs to the glycosyltransferase 4 family. MraY subfamily. The cofactor is Mg(2+).

Its subcellular location is the cell inner membrane. The catalysed reaction is UDP-N-acetyl-alpha-D-muramoyl-L-alanyl-gamma-D-glutamyl-meso-2,6-diaminopimeloyl-D-alanyl-D-alanine + di-trans,octa-cis-undecaprenyl phosphate = di-trans,octa-cis-undecaprenyl diphospho-N-acetyl-alpha-D-muramoyl-L-alanyl-D-glutamyl-meso-2,6-diaminopimeloyl-D-alanyl-D-alanine + UMP. The protein operates within cell wall biogenesis; peptidoglycan biosynthesis. In terms of biological role, catalyzes the initial step of the lipid cycle reactions in the biosynthesis of the cell wall peptidoglycan: transfers peptidoglycan precursor phospho-MurNAc-pentapeptide from UDP-MurNAc-pentapeptide onto the lipid carrier undecaprenyl phosphate, yielding undecaprenyl-pyrophosphoryl-MurNAc-pentapeptide, known as lipid I. The chain is Phospho-N-acetylmuramoyl-pentapeptide-transferase from Beijerinckia indica subsp. indica (strain ATCC 9039 / DSM 1715 / NCIMB 8712).